The primary structure comprises 247 residues: Capsid protein (247 aa).

A DNA-binding region spans residues 1 to 40; the sequence is MWGTSNCACAKFQIRRRYARPYRRRHIRRYRRRRRHFRRR. The segment at 15–44 is nuclear localization signals; sequence RRRYARPYRRRHIRRYRRRRRHFRRRRFTT.

Belongs to the circoviridae capsid protein family. As to quaternary structure, homomultimer. Assembles in the nucleus, presumably in an immature form, then migrates to the cytoplasm once assembled as mature virion. Interacts with Rep; this interaction relocates Rep into the nucleus.

It localises to the host nucleus. The protein resides in the virion. Self-assembles to form the virion icosahedral capsid with a T=1 symmetry. This very small capsid (17 - 22 nm in diameter) allows the virus to be very stable in the environment and resistant to some disinfectants, including detergents. Essential for the initial attachment to heparan sulfate moieties and chondroitin sulfate B of the host cell surface proteoglycans. After attachment, the virus is endocytosed and traffics to the nucleus. The capsid protein binds and transports the viral genome and Rep across the nuclear envelope. This chain is Capsid protein (Cap), found in Beak and feather disease virus (BFDV).